We begin with the raw amino-acid sequence, 222 residues long: Large ribosomal subunit protein uL4 (222 aa).

The segment at 42-100 (AAGRQGTHSTKTRGEVRGGGKKPYRQKGTGRARQGSVRAPQFTGGGTVHGPKPRDYAQR) is disordered. The segment covering 60 to 71 (GGKKPYRQKGTG) has biased composition (basic residues).

The protein belongs to the universal ribosomal protein uL4 family. Part of the 50S ribosomal subunit.

Functionally, one of the primary rRNA binding proteins, this protein initially binds near the 5'-end of the 23S rRNA. It is important during the early stages of 50S assembly. It makes multiple contacts with different domains of the 23S rRNA in the assembled 50S subunit and ribosome. Forms part of the polypeptide exit tunnel. The polypeptide is Large ribosomal subunit protein uL4 (Thermobifida fusca (strain YX)).